A 72-amino-acid chain; its full sequence is Conotoxin TxMMSK-04 (72 aa).

The N-terminal stretch at 1-20 is a signal peptide; sequence MMSKLGVLLTICLLLFPLTA. Residues 21-51 constitute a propeptide that is removed on maturation; that stretch reads VPLDGDQPADRPAERMQDGISSEHHPFFDSV. Pyrrolidone carboxylic acid is present on glutamine 55. 3 cysteine pairs are disulfide-bonded: cysteine 57/cysteine 71, cysteine 58/cysteine 67, and cysteine 63/cysteine 70. Position 69 is a 4-hydroxyproline (proline 69). A Cysteine amide modification is found at cysteine 71.

Belongs to the conotoxin M superfamily. As to expression, expressed by the venom duct.

It is found in the secreted. The polypeptide is Conotoxin TxMMSK-04 (Conus textile (Cloth-of-gold cone)).